We begin with the raw amino-acid sequence, 172 residues long: RNA pyrophosphohydrolase (172 aa).

Positions 6–149 (GFRANVGIII…KRDVYRKVMK (144 aa)) constitute a Nudix hydrolase domain. A Nudix box motif is present at residues 38-59 (GGVDEGETPEEAMFRELYEEVG).

It belongs to the Nudix hydrolase family. RppH subfamily. It depends on a divalent metal cation as a cofactor.

Accelerates the degradation of transcripts by removing pyrophosphate from the 5'-end of triphosphorylated RNA, leading to a more labile monophosphorylated state that can stimulate subsequent ribonuclease cleavage. The protein is RNA pyrophosphohydrolase of Shewanella sediminis (strain HAW-EB3).